Here is a 135-residue protein sequence, read N- to C-terminus: UPF0251 protein Hore_18270 (135 aa).

It belongs to the UPF0251 family.

This is UPF0251 protein Hore_18270 from Halothermothrix orenii (strain H 168 / OCM 544 / DSM 9562).